Consider the following 1158-residue polypeptide: Adipocyte enhancer-binding protein 1 (1158 aa).

Residues 1–25 (MAAVRGAPLLSCLLALLALCPGGRP) form the signal peptide. Residues 41-387 (FLSELEPEPR…TPTEKVKCPP (347 aa)) are disordered. Residues 45-55 (LEPEPREDDVE) show a composition bias toward acidic residues. The segment covering 100–110 (DKGPKVPKESL) has biased composition (basic and acidic residues). Positions 116–166 (PPKKGKEKPPKATKKPKEKPPKATKKPKEKPPKATKKPKEKPPKATKKPPS) are enriched in basic residues. The segment covering 182–192 (PLPPPPSPGPE) has biased composition (pro residues). Residues 193 to 202 (ELPQEGGAPL) are compositionally biased toward low complexity. Over residues 211-223 (EETHVEAREHQPE) the composition is skewed to basic and acidic residues. The span at 252-266 (RQKQPRPPPSRRRRP) shows a compositional bias: basic residues. A compositionally biased stretch (basic and acidic residues) spans 267 to 289 (ERVWPEPPEEKAPAPAPEERIEP). A compositionally biased stretch (pro residues) spans 290–300 (PVKPLLPPLPP). Residues 326–371 (PDAERQTDEEKEELKKPKKEDSSPKEETDKWAVEKGKDHKEPRKGE) are compositionally biased toward basic and acidic residues. One can recognise an F5/8 type C domain in the interval 383 to 540 (VKCPPIGMES…LCMRLEVLGC (158 aa)). Residues 390 to 555 (MESHRIEDNQ…YSYYAQNEVV (166 aa)) are required for DNA-binding and interaction with NFKBIA. Positions 421-624 (TGATEDDYYD…EPEFRYTAGI (204 aa)) are interaction with MAPK1 and MAPK3. An N-linked (GlcNAc...) asparagine glycan is attached at Asn528. Positions 555–985 (VATDDLDFRH…TQCNFILARS (431 aa)) are interaction with PTEN. The Peptidase M14 domain occupies 563 to 904 (RHHSYKDMRQ…EALLTFMEQV (342 aa)). Residue Asn922 is glycosylated (N-linked (GlcNAc...) asparagine). The interval 941–1158 (DYWRILNPGE…ETYTVNFGDF (218 aa)) is required for transcriptional repression. The tract at residues 1006 to 1158 (DPSRPMTPQQ…ETYTVNFGDF (153 aa)) is interaction with MAPK1 and MAPK3. Residues 1108–1137 (EFETQLEPEFETQLEPEFEEEEEEEKEEEI) are compositionally biased toward acidic residues. A disordered region spans residues 1108–1141 (EFETQLEPEFETQLEPEFEEEEEEEKEEEIATGQ).

Belongs to the peptidase M14 family. As to quaternary structure, isoform 1: Interacts with different types of collagen, including collagens I, III, and V. Isoform 2: Interacts with GNG5, NFKBIA, MAPK1, MAPK3 and PTEN. Interaction with MAPK1 may stimulate DNA-binding. May interact with calmodulin. Binds to DNA in vitro. In terms of processing, phosphorylated by MAPK1 in vitro. As to expression, expressed in osteoblast and visceral fat.

It localises to the secreted. It is found in the cytoplasm. Its subcellular location is the nucleus. In terms of biological role, as a positive regulator of collagen fibrillogenesis, it is probably involved in the organization and remodeling of the extracellular matrix. Its function is as follows. May positively regulate MAP-kinase activity in adipocytes, leading to enhanced adipocyte proliferation and reduced adipocyte differentiation. May also positively regulate NF-kappa-B activity in macrophages by promoting the phosphorylation and subsequent degradation of I-kappa-B-alpha (NFKBIA), leading to enhanced macrophage inflammatory responsiveness. Can act as a transcriptional repressor. The polypeptide is Adipocyte enhancer-binding protein 1 (AEBP1) (Homo sapiens (Human)).